Here is a 148-residue protein sequence, read N- to C-terminus: Hemoglobin subunit beta (148 aa).

Positions 3–148 (XWTDXERAAI…VVSALGRQYH (146 aa)) constitute a Globin domain. His64 and His93 together coordinate heme b.

The protein belongs to the globin family. As to quaternary structure, heterotetramer of two alpha chains and two beta chains. In terms of tissue distribution, red blood cells.

Involved in oxygen transport from gills to the various peripheral tissues. In Decapterus maruadsi (Japanese scad), this protein is Hemoglobin subunit beta (hbb).